A 37-amino-acid chain; its full sequence is Neuropeptide Y1-like conopeptide (37 aa).

Residue Phe37 is modified to Phenylalanine amide.

Belongs to the NPY family. As to expression, expressed by the venom duct.

It is found in the secreted. Functionally, causes hyperactivity such as jumping, rapid circling and tail flicking, when intraventricularly injected into mice brain. The chain is Neuropeptide Y1-like conopeptide from Conus betulinus (Beech cone).